A 499-amino-acid polypeptide reads, in one-letter code: Ubiquitin carboxyl-terminal hydrolase 16 (499 aa).

Residues 53–497 form the USP domain; that stretch reads VGLINRGNDC…YAYMLYYERV (445 aa). The active-site Nucleophile is the C62. H407 (proton acceptor) is an active-site residue.

It belongs to the peptidase C19 family.

It carries out the reaction Thiol-dependent hydrolysis of ester, thioester, amide, peptide and isopeptide bonds formed by the C-terminal Gly of ubiquitin (a 76-residue protein attached to proteins as an intracellular targeting signal).. The protein is Ubiquitin carboxyl-terminal hydrolase 16 (UBP16) of Saccharomyces cerevisiae (strain ATCC 204508 / S288c) (Baker's yeast).